Reading from the N-terminus, the 43-residue chain is Protein PsbN (43 aa).

A helical membrane pass occupies residues 5 to 27; that stretch reads TLVAISISGSLVSFTGYALYTAF.

The protein belongs to the PsbN family.

It localises to the plastid. It is found in the chloroplast thylakoid membrane. In terms of biological role, may play a role in photosystem I and II biogenesis. The protein is Protein PsbN of Drimys granadensis.